A 546-amino-acid polypeptide reads, in one-letter code: Probable protein kinase UbiB (546 aa).

Residues 124–502 (DFDIKPLASA…QARQGQSRYL (379 aa)) form the Protein kinase domain. ATP contacts are provided by residues 130–138 (LASASIAQV) and Lys153. The Proton acceptor role is filled by Asp288. The next 2 membrane-spanning stretches (helical) occupy residues 499–519 (SRYL…LLIS) and 521–541 (VEAD…WIIG).

Belongs to the ABC1 family. UbiB subfamily.

It is found in the cell inner membrane. It participates in cofactor biosynthesis; ubiquinone biosynthesis [regulation]. Functionally, is probably a protein kinase regulator of UbiI activity which is involved in aerobic coenzyme Q (ubiquinone) biosynthesis. The polypeptide is Probable protein kinase UbiB (Pectobacterium carotovorum subsp. carotovorum (strain PC1)).